Consider the following 98-residue polypeptide: Beta-elicitin DRE-beta (98 aa).

3 cysteine pairs are disulfide-bonded: cysteine 3-cysteine 71, cysteine 27-cysteine 56, and cysteine 51-cysteine 95.

Belongs to the elicitin family.

Its subcellular location is the secreted. Induces local and distal defense responses (incompatible hypersensitive reaction) in plants from the solanaceae and cruciferae families. Elicits leaf necrosis and causes the accumulation of pathogenesis-related proteins. Might interact with the lipidic molecules of the plasma membrane. The sequence is that of Beta-elicitin DRE-beta from Phytophthora drechsleri.